A 786-amino-acid polypeptide reads, in one-letter code: Protein SEY1 (786 aa).

Over 1-684 (MSDLKEAIQL…KRSIVNTTER (684 aa)) the chain is Cytoplasmic. In terms of domain architecture, GB1/RHD3-type G spans 35–262 (GVKYHVISVF…QDASFFKDEY (228 aa)). 45-52 (GSQSSGKS) serves as a coordination point for GTP. Positions 355 to 375 (KKVYEERRDDLIKQLNTIIDE) form a coiled coil. Residues 685 to 705 (IPLYMYALVVALGWGRIITIL) form a helical membrane-spanning segment. Residues 706–708 (RNP) lie on the Lumenal side of the membrane. The helical transmembrane segment at 709 to 729 (ATIILSIIVLAGAYFVHKLNL) threads the bilayer. Topologically, residues 730–786 (WGPLLQFANQATGQATAVLKQTVRSLVVDEEPKRKILVEPHESEGVDKEPSKNDQHL) are cytoplasmic. The interval 765-786 (ILVEPHESEGVDKEPSKNDQHL) is disordered.

This sequence belongs to the TRAFAC class dynamin-like GTPase superfamily. GB1/RHD3 GTPase family. RHD3 subfamily.

Its subcellular location is the endoplasmic reticulum membrane. In terms of biological role, cooperates with the reticulon proteins and tubule-shaping DP1 family proteins to generate and maintain the structure of the tubular endoplasmic reticulum network. Has GTPase activity, which is required for its function in ER organization. The protein is Protein SEY1 of Kluyveromyces lactis (strain ATCC 8585 / CBS 2359 / DSM 70799 / NBRC 1267 / NRRL Y-1140 / WM37) (Yeast).